Reading from the N-terminus, the 105-residue chain is Pyrimidine/purine nucleoside phosphorylase (105 aa).

The protein belongs to the nucleoside phosphorylase PpnP family.

It catalyses the reaction a purine D-ribonucleoside + phosphate = a purine nucleobase + alpha-D-ribose 1-phosphate. The enzyme catalyses adenosine + phosphate = alpha-D-ribose 1-phosphate + adenine. It carries out the reaction cytidine + phosphate = cytosine + alpha-D-ribose 1-phosphate. The catalysed reaction is guanosine + phosphate = alpha-D-ribose 1-phosphate + guanine. It catalyses the reaction inosine + phosphate = alpha-D-ribose 1-phosphate + hypoxanthine. The enzyme catalyses thymidine + phosphate = 2-deoxy-alpha-D-ribose 1-phosphate + thymine. It carries out the reaction uridine + phosphate = alpha-D-ribose 1-phosphate + uracil. The catalysed reaction is xanthosine + phosphate = alpha-D-ribose 1-phosphate + xanthine. Its function is as follows. Catalyzes the phosphorolysis of diverse nucleosides, yielding D-ribose 1-phosphate and the respective free bases. Can use uridine, adenosine, guanosine, cytidine, thymidine, inosine and xanthosine as substrates. Also catalyzes the reverse reactions. This Cupriavidus pinatubonensis (strain JMP 134 / LMG 1197) (Cupriavidus necator (strain JMP 134)) protein is Pyrimidine/purine nucleoside phosphorylase.